Consider the following 167-residue polypeptide: Large ribosomal subunit protein uL10 (167 aa).

It belongs to the universal ribosomal protein uL10 family. As to quaternary structure, part of the ribosomal stalk of the 50S ribosomal subunit. The N-terminus interacts with L11 and the large rRNA to form the base of the stalk. The C-terminus forms an elongated spine to which L12 dimers bind in a sequential fashion forming a multimeric L10(L12)X complex.

Functionally, forms part of the ribosomal stalk, playing a central role in the interaction of the ribosome with GTP-bound translation factors. The polypeptide is Large ribosomal subunit protein uL10 (Cytophaga hutchinsonii (strain ATCC 33406 / DSM 1761 / CIP 103989 / NBRC 15051 / NCIMB 9469 / D465)).